A 460-amino-acid chain; its full sequence is Argininosuccinate lyase (460 aa).

This sequence belongs to the lyase 1 family. Argininosuccinate lyase subfamily.

It localises to the cytoplasm. It catalyses the reaction 2-(N(omega)-L-arginino)succinate = fumarate + L-arginine. The protein operates within amino-acid biosynthesis; L-arginine biosynthesis; L-arginine from L-ornithine and carbamoyl phosphate: step 3/3. This chain is Argininosuccinate lyase, found in Mannheimia succiniciproducens (strain KCTC 0769BP / MBEL55E).